The primary structure comprises 338 residues: S-adenosylmethionine:tRNA ribosyltransferase-isomerase (338 aa).

This sequence belongs to the QueA family. In terms of assembly, monomer.

It localises to the cytoplasm. The catalysed reaction is 7-aminomethyl-7-carbaguanosine(34) in tRNA + S-adenosyl-L-methionine = epoxyqueuosine(34) in tRNA + adenine + L-methionine + 2 H(+). Its pathway is tRNA modification; tRNA-queuosine biosynthesis. Functionally, transfers and isomerizes the ribose moiety from AdoMet to the 7-aminomethyl group of 7-deazaguanine (preQ1-tRNA) to give epoxyqueuosine (oQ-tRNA). The polypeptide is S-adenosylmethionine:tRNA ribosyltransferase-isomerase (Carboxydothermus hydrogenoformans (strain ATCC BAA-161 / DSM 6008 / Z-2901)).